Consider the following 209-residue polypeptide: Putative cardiolipin synthase (209 aa).

Transmembrane regions (helical) follow at residues 27–47 (AFVY…ILVF), 82–102 (VTVP…VLTL), 126–146 (VTYV…TILL), and 157–177 (LLAC…WAFV).

The protein belongs to the CDP-alcohol phosphatidyltransferase class-I family.

The protein localises to the cell membrane. It catalyses the reaction a CDP-1,2-diacyl-sn-glycerol + a 1,2-diacyl-sn-glycero-3-phospho-(1'-sn-glycerol) = a cardiolipin + CMP + H(+). The protein operates within lipid metabolism; phospholipid metabolism. Functionally, may catalyze the biosynthesis of cardiolipin from phosphatidylglycerol (PG) and CDP-diacylglycerol. The chain is Putative cardiolipin synthase from Mycobacterium bovis (strain ATCC BAA-935 / AF2122/97).